Reading from the N-terminus, the 164-residue chain is Transcriptional repressor NrdR (164 aa).

Residues 3–34 (CPKCNYHKSSVVDSRQAEDGNTIRRRRECEQC) fold into a zinc finger. Residues 49 to 139 (LLVIKKDGTR…VYKSFKDVDE (91 aa)) enclose the ATP-cone domain.

This sequence belongs to the NrdR family. The cofactor is Zn(2+).

In terms of biological role, negatively regulates transcription of bacterial ribonucleotide reductase nrd genes and operons by binding to NrdR-boxes. The chain is Transcriptional repressor NrdR from Streptococcus pyogenes serotype M5 (strain Manfredo).